Consider the following 122-residue polypeptide: Large ribosomal subunit protein uL14 (122 aa).

It belongs to the universal ribosomal protein uL14 family. In terms of assembly, part of the 50S ribosomal subunit. Forms a cluster with proteins L3 and L19. In the 70S ribosome, L14 and L19 interact and together make contacts with the 16S rRNA in bridges B5 and B8.

In terms of biological role, binds to 23S rRNA. Forms part of two intersubunit bridges in the 70S ribosome. The protein is Large ribosomal subunit protein uL14 of Thermosipho africanus (strain TCF52B).